The chain runs to 1283 residues: Bifunctional dioxygenase (DOX)-epoxy alcohol synthase (EAS) (1283 aa).

A disordered region spans residues 1 to 64 (MAEHKNGVAT…LPKEMGDGSY (64 aa)). The interval 130-476 (TNSFISQLWN…DGKFNDDELV (347 aa)) is fatty acid alpha-dioxygenase. Position 227 (His-227) interacts with heme b. Tyr-405 is a catalytic residue. Residue His-408 coordinates heme b. Residues 684-1108 (INIIGYNAAK…WDDGCGTDLF (425 aa)) are epoxy alcohol synthase. A heme-binding site is contributed by Cys-1035.

It in the N-terminal section; belongs to the peroxidase family. This sequence in the C-terminal section; belongs to the cytochrome P450 family. As to quaternary structure, homotetramer. Requires heme b as cofactor. Heme is required as a cofactor.

The catalysed reaction is (9Z,12Z)-octadecadienoate + O2 = (8E,10R,12Z)-10-hydroperoxyoctadeca-8,12-dienoate. The enzyme catalyses (8E,10R,12Z)-10-hydroperoxyoctadeca-8,12-dienoate = (12S,13R)-epoxy-(10R)-hydroxy-(8E)-octadecenoate. It carries out the reaction (9Z)-octadecenoate + O2 = (8R)-hydroperoxy-(9Z)-octadecenoate. In terms of biological role, bifunctional dioxygenase (DOX)-epoxy alcohol synthase (EAS) that converts linoleic acid (18:2n-6) sequentially to 10(R)-hydroperoxy-8(E),12(Z)-octadecadienoic acid (10R-HPODE) and 10R-HPODE further to 12(13)-epoxy-10-hydroxy-8(E)-octa-decenoic acid as the end product. Linoleic acid is oxidized mainly to the R stereoisomer of 10-HPODE. The dioxygenase domain is also able to oygenate position C-8 of linoleic acid to produce 8(R)-hydroperoxy-8(E),12(Z)-octadecadienoic acid (8R-HPODE). In Fusarium oxysporum (strain Fo5176) (Fusarium vascular wilt), this protein is Bifunctional dioxygenase (DOX)-epoxy alcohol synthase (EAS).